Here is a 309-residue protein sequence, read N- to C-terminus: tRNA pseudouridine synthase B (309 aa).

Catalysis depends on Asp-51, which acts as the Nucleophile.

It belongs to the pseudouridine synthase TruB family. Type 1 subfamily.

The catalysed reaction is uridine(55) in tRNA = pseudouridine(55) in tRNA. In terms of biological role, responsible for synthesis of pseudouridine from uracil-55 in the psi GC loop of transfer RNAs. The chain is tRNA pseudouridine synthase B from Coxiella burnetii (strain RSA 493 / Nine Mile phase I).